A 448-amino-acid chain; its full sequence is Phosphoglucosamine mutase (448 aa).

Ser100 (phosphoserine intermediate) is an active-site residue. 4 residues coordinate Mg(2+): Ser100, Asp240, Asp242, and Asp244. Phosphoserine is present on Ser100.

This sequence belongs to the phosphohexose mutase family. It depends on Mg(2+) as a cofactor. Activated by phosphorylation.

It catalyses the reaction alpha-D-glucosamine 1-phosphate = D-glucosamine 6-phosphate. Its function is as follows. Catalyzes the conversion of glucosamine-6-phosphate to glucosamine-1-phosphate. This is Phosphoglucosamine mutase from Bacillus pumilus (strain SAFR-032).